The primary structure comprises 194 residues: Peptidyl-tRNA hydrolase (194 aa).

Tyrosine 17 is a binding site for tRNA. Histidine 22 functions as the Proton acceptor in the catalytic mechanism. Residues tyrosine 68, asparagine 70, and asparagine 116 each contribute to the tRNA site.

It belongs to the PTH family. In terms of assembly, monomer.

Its subcellular location is the cytoplasm. The enzyme catalyses an N-acyl-L-alpha-aminoacyl-tRNA + H2O = an N-acyl-L-amino acid + a tRNA + H(+). In terms of biological role, hydrolyzes ribosome-free peptidyl-tRNAs (with 1 or more amino acids incorporated), which drop off the ribosome during protein synthesis, or as a result of ribosome stalling. Functionally, catalyzes the release of premature peptidyl moieties from peptidyl-tRNA molecules trapped in stalled 50S ribosomal subunits, and thus maintains levels of free tRNAs and 50S ribosomes. The chain is Peptidyl-tRNA hydrolase from Pseudomonas syringae pv. syringae (strain B728a).